A 135-amino-acid chain; its full sequence is Transcriptional activator protein (135 aa).

The Nuclear localization signal motif lies at 17-32 (KVQHKIAKKKPIRRKR). A zinc finger spans residues 37-54 (CGCSYYLHLNCNNHGFTH). 2 stretches are compositionally biased toward polar residues: residues 77-87 (LFQDNRTQPEA) and 101-115 (IQPQ…SQMF). The segment at 77-117 (LFQDNRTQPEAISNEPRHHFHSDKIQPQHQEGNGDSQMFSR) is disordered. The segment at 120–135 (NLDDITASDWSFLKSI) is transactivation.

The protein belongs to the geminiviridae transcriptional activator protein family. In terms of assembly, monomer. Homodimer. Homooligomer. Self-interaction correlates with nuclear localization and efficient activation of transcription. Monomers suppress local silencing by interacting with and inactivating host adenosine kinase 2 (ADK2) in the cytoplasm. Interacts with and inhibits host SNF1 kinase. Binds to ssDNA. May interact with host RPS27A. In terms of processing, phosphorylated.

It localises to the host nucleus. It is found in the host cytoplasm. Multifunctional protein that modulates host antiviral defenses and promotes host attractiveness to insect vectors. Acts as a suppressor of RNA-mediated gene silencing, also known as post-transcriptional gene silencing (PTGS), a mechanism of plant viral defense that limits the accumulation of viral RNAs. TrAP suppresses the host RNA silencing by inhibiting adenosine kinase 2 (ADK2), a kinase involved in a general methylation pathway. Also suppresses the host basal defense by interacting with and inhibiting SNF1 kinase, a key regulator of cell metabolism implicated in innate antiviral defense. In terms of biological role, inhibits signal transduction by the phytohormone jasmonate, making the infected plant more attractive to aphids, which are the second host to play a role as a dissemination vector. Acts by binding to ubiquitin precursor RPS27A, thereby preventing ubiquitin degradation of JAZ. The polypeptide is Transcriptional activator protein (Tomato yellow leaf curl virus (strain Israel) (TYLCV)).